The primary structure comprises 256 residues: Imidazole glycerol phosphate synthase subunit HisF (256 aa).

Catalysis depends on residues Asp11 and Asp130.

This sequence belongs to the HisA/HisF family. Heterodimer of HisH and HisF.

It is found in the cytoplasm. The catalysed reaction is 5-[(5-phospho-1-deoxy-D-ribulos-1-ylimino)methylamino]-1-(5-phospho-beta-D-ribosyl)imidazole-4-carboxamide + L-glutamine = D-erythro-1-(imidazol-4-yl)glycerol 3-phosphate + 5-amino-1-(5-phospho-beta-D-ribosyl)imidazole-4-carboxamide + L-glutamate + H(+). Its pathway is amino-acid biosynthesis; L-histidine biosynthesis; L-histidine from 5-phospho-alpha-D-ribose 1-diphosphate: step 5/9. In terms of biological role, IGPS catalyzes the conversion of PRFAR and glutamine to IGP, AICAR and glutamate. The HisF subunit catalyzes the cyclization activity that produces IGP and AICAR from PRFAR using the ammonia provided by the HisH subunit. The sequence is that of Imidazole glycerol phosphate synthase subunit HisF from Cupriavidus necator (strain ATCC 17699 / DSM 428 / KCTC 22496 / NCIMB 10442 / H16 / Stanier 337) (Ralstonia eutropha).